A 374-amino-acid polypeptide reads, in one-letter code: Biotin synthase (374 aa).

One can recognise a Radical SAM core domain in the interval 51-278; it reads NTVKVNYLVN…DTEIRIAGGR (228 aa). Residues Cys-66, Cys-70, and Cys-73 each contribute to the [4Fe-4S] cluster site. [2Fe-2S] cluster is bound by residues Cys-110, Cys-143, Cys-203, and Arg-273. The tract at residues 346-374 is disordered; the sequence is IAGGTSVAGSAPDPAIRRRGAGTDVPANA.

This sequence belongs to the radical SAM superfamily. Biotin synthase family. As to quaternary structure, homodimer. [4Fe-4S] cluster is required as a cofactor. It depends on [2Fe-2S] cluster as a cofactor.

The catalysed reaction is (4R,5S)-dethiobiotin + (sulfur carrier)-SH + 2 reduced [2Fe-2S]-[ferredoxin] + 2 S-adenosyl-L-methionine = (sulfur carrier)-H + biotin + 2 5'-deoxyadenosine + 2 L-methionine + 2 oxidized [2Fe-2S]-[ferredoxin]. It functions in the pathway cofactor biosynthesis; biotin biosynthesis; biotin from 7,8-diaminononanoate: step 2/2. Catalyzes the conversion of dethiobiotin (DTB) to biotin by the insertion of a sulfur atom into dethiobiotin via a radical-based mechanism. The polypeptide is Biotin synthase (Nocardioides sp. (strain ATCC BAA-499 / JS614)).